A 36-amino-acid chain; its full sequence is U4-ctenitoxin-Pr1a (36 aa).

Intrachain disulfides connect C3–C17, C10–C22, and C16–C34.

Expressed by the venom gland.

The protein resides in the secreted. In terms of biological role, neurotoxin. Causes spastic paralysis and death in mice. Moderate inhibitor of L-type calcium channels (Cav1/CACNA1). This is U4-ctenitoxin-Pr1a from Phoneutria reidyi (Brazilian Amazonian armed spider).